The following is a 538-amino-acid chain: Putative cysteine ligase BshC (538 aa).

Residues 421-485 (VEEKFQEAKK…LERRHEVELN (65 aa)) adopt a coiled-coil conformation.

This sequence belongs to the BshC family.

In terms of biological role, involved in bacillithiol (BSH) biosynthesis. May catalyze the last step of the pathway, the addition of cysteine to glucosamine malate (GlcN-Mal) to generate BSH. The chain is Putative cysteine ligase BshC from Bacillus cytotoxicus (strain DSM 22905 / CIP 110041 / 391-98 / NVH 391-98).